Here is a 408-residue protein sequence, read N- to C-terminus: Tyrosine--tRNA ligase (408 aa).

Tyr35 is a binding site for L-tyrosine. The 'HIGH' region motif lies at Pro40–His49. L-tyrosine contacts are provided by Tyr168 and Gln172. Positions Lys228–Thr232 match the 'KMSKS' region motif. Lys231 is an ATP binding site. The S4 RNA-binding domain maps to Ile342–Leu407.

It belongs to the class-I aminoacyl-tRNA synthetase family. TyrS type 1 subfamily. Homodimer.

It localises to the cytoplasm. The enzyme catalyses tRNA(Tyr) + L-tyrosine + ATP = L-tyrosyl-tRNA(Tyr) + AMP + diphosphate + H(+). Functionally, catalyzes the attachment of tyrosine to tRNA(Tyr) in a two-step reaction: tyrosine is first activated by ATP to form Tyr-AMP and then transferred to the acceptor end of tRNA(Tyr). The chain is Tyrosine--tRNA ligase from Acetivibrio thermocellus (strain ATCC 27405 / DSM 1237 / JCM 9322 / NBRC 103400 / NCIMB 10682 / NRRL B-4536 / VPI 7372) (Clostridium thermocellum).